Here is a 170-residue protein sequence, read N- to C-terminus: MNLDSKIRVIEDFPKKGISFKDITTLLKDKEAFRSMVDQLSDQLIDLDIDIVVGPEARGFLVGAPVAYKIGAGFVPIRKPGKLPGETISYEYELEYGTDSLEIHTDAIQPGQRVAILDDLLATGGTVVATAKLIEELGGEVVSINFLIELGFLNGGEVLKGYSVKSLLKY.

This sequence belongs to the purine/pyrimidine phosphoribosyltransferase family. In terms of assembly, homodimer.

The protein localises to the cytoplasm. The enzyme catalyses AMP + diphosphate = 5-phospho-alpha-D-ribose 1-diphosphate + adenine. It functions in the pathway purine metabolism; AMP biosynthesis via salvage pathway; AMP from adenine: step 1/1. Functionally, catalyzes a salvage reaction resulting in the formation of AMP, that is energically less costly than de novo synthesis. This Alkaliphilus metalliredigens (strain QYMF) protein is Adenine phosphoribosyltransferase.